Reading from the N-terminus, the 600-residue chain is Integrator complex subunit 11 (600 aa).

Positions 68, 70, 72, 73, 157, and 178 each coordinate Zn(2+). The HXHXDH motif motif lies at 68–73; it reads HFHLDH. The active site involves Glu203. His414 lines the Zn(2+) pocket. The Nuclear localization signal signature appears at 469-479; the sequence is LLPDAKKPKLM.

Belongs to the metallo-beta-lactamase superfamily. RNA-metabolizing metallo-beta-lactamase-like family. INTS11 subfamily. Component of the Integrator complex, composed of core subunits INTS1, INTS2, INTS3, INTS4, INTS5, INTS6, INTS7, INTS8, INTS9/RC74, INTS10, INTS11/CPSF3L, INTS12, INTS13, INTS14 and INTS15. The core complex associates with protein phosphatase 2A subunits PPP2CA and PPP2R1A, to form the Integrator-PP2A (INTAC) complex. INTS11 is part of the RNA endonuclease subcomplex, composed of INTS4, INTS9, INTS11 and inositol hexakisphosphate (InsP6). Zn(2+) serves as cofactor.

The protein localises to the nucleus. It is found in the cytoplasm. Functionally, RNA endonuclease component of the integrator complex, a multiprotein complex that terminates RNA polymerase II (Pol II) transcription in the promoter-proximal region of genes. The integrator complex provides a quality checkpoint during transcription elongation by driving premature transcription termination of transcripts that are unfavorably configured for transcriptional elongation: the complex terminates transcription by (1) catalyzing dephosphorylation of the C-terminal domain (CTD) of Pol II subunit POLR2A/RPB1 and SUPT5H/SPT5, (2) degrading the exiting nascent RNA transcript via endonuclease activity and (3) promoting the release of Pol II from bound DNA. The integrator complex is also involved in terminating the synthesis of non-coding Pol II transcripts, such as enhancer RNAs (eRNAs), small nuclear RNAs (snRNAs), telomerase RNAs and long non-coding RNAs (lncRNAs). Within the integrator complex, INTS11 constitutes the RNA endonuclease subunit that degrades exiting nascent RNA transcripts. The chain is Integrator complex subunit 11 (INTS11) from Gallus gallus (Chicken).